The sequence spans 617 residues: Pyrophosphate--fructose 6-phosphate 1-phosphotransferase subunit alpha 2 (617 aa).

This sequence belongs to the phosphofructokinase type A (PFKA) family. PPi-dependent PFK group II subfamily. Clade 'Long' sub-subfamily. As to quaternary structure, tetramer of two alpha (regulatory) and two beta (catalytic) chains. In terms of tissue distribution, expressed in roots and specific parts such as the trichomes of leaves, cotyledon veins, as well as in stamen and gynoecium of flowers.

Its subcellular location is the cytoplasm. It functions in the pathway carbohydrate degradation; glycolysis; D-glyceraldehyde 3-phosphate and glycerone phosphate from D-glucose: step 3/4. Its activity is regulated as follows. Allosterically activated by fructose 2,6-bisphosphate. Regulatory subunit of pyrophosphate--fructose 6-phosphate 1-phosphotransferase. This chain is Pyrophosphate--fructose 6-phosphate 1-phosphotransferase subunit alpha 2, found in Arabidopsis thaliana (Mouse-ear cress).